The primary structure comprises 134 residues: Small ribosomal subunit protein uS8 (134 aa).

Belongs to the universal ribosomal protein uS8 family. As to quaternary structure, part of the 30S ribosomal subunit. Contacts proteins S5 and S12.

In terms of biological role, one of the primary rRNA binding proteins, it binds directly to 16S rRNA central domain where it helps coordinate assembly of the platform of the 30S subunit. The chain is Small ribosomal subunit protein uS8 from Petrotoga mobilis (strain DSM 10674 / SJ95).